The following is an 80-amino-acid chain: Large ribosomal subunit protein uL24 (80 aa).

Belongs to the universal ribosomal protein uL24 family. Part of the 50S ribosomal subunit.

In terms of biological role, one of two assembly initiator proteins, it binds directly to the 5'-end of the 23S rRNA, where it nucleates assembly of the 50S subunit. Functionally, one of the proteins that surrounds the polypeptide exit tunnel on the outside of the subunit. In Chlorobium phaeovibrioides (strain DSM 265 / 1930) (Prosthecochloris vibrioformis (strain DSM 265)), this protein is Large ribosomal subunit protein uL24.